The chain runs to 231 residues: tRNA (guanine-N(1)-)-methyltransferase (231 aa).

S-adenosyl-L-methionine is bound by residues Gly-109 and 133-138 (IGDYVL).

This sequence belongs to the RNA methyltransferase TrmD family. As to quaternary structure, homodimer.

The protein resides in the cytoplasm. The enzyme catalyses guanosine(37) in tRNA + S-adenosyl-L-methionine = N(1)-methylguanosine(37) in tRNA + S-adenosyl-L-homocysteine + H(+). Its function is as follows. Specifically methylates guanosine-37 in various tRNAs. The sequence is that of tRNA (guanine-N(1)-)-methyltransferase from Nocardia farcinica (strain IFM 10152).